The chain runs to 38 residues: Large ribosomal subunit protein bL36 (38 aa).

Belongs to the bacterial ribosomal protein bL36 family.

The polypeptide is Large ribosomal subunit protein bL36 (Chloroherpeton thalassium (strain ATCC 35110 / GB-78)).